We begin with the raw amino-acid sequence, 412 residues long: Vacuolar calcium ion transporter (412 aa).

Residues 1-55 (MIERLKIAKNRLEAMNSFNFPAQDRHERAPLLGSEYDHSMARQLSLLNVVGMTKS) are Cytoplasmic-facing. Residues 56–76 (VLMSSYFNLMLVFVPIGLIAG) form a helical membrane-spanning segment. Residues 77-83 (WFEWNAK) are Lumenal-facing. A helical membrane pass occupies residues 84–104 (SVFILNMLAIIPLASLLSFAT). Residues 105–114 (EQLSIISGPT) lie on the Cytoplasmic side of the membrane. Residues 115–135 (LGALLNASFGNAIELIVGVLA) traverse the membrane as a helical segment. At 136 to 148 (LKRGELRIVQSSL) the chain is on the lumenal side. A helical transmembrane segment spans residues 149-169 (LGSILSNLLLVFGMCLVTTGI). Topologically, residues 170 to 177 (RREITTFN) are cytoplasmic. The chain crosses the membrane as a helical span at residues 178 to 198 (ITVAQTMIAMLALSTATILIP). Residues 199–215 (ATFHYSLPDNANSENAL) lie on the Lumenal side of the membrane. The helical transmembrane segment at 216–236 (LHVSRGTAVIVLIVYVLLLVF) threads the bilayer. Residues 237–264 (QLKTHKHVCHDPSEVEEETEPRILGLRS) are Cytoplasmic-facing. Residues 265 to 285 (SIAMLAIVTVFVSLCADYLVG) form a helical membrane-spanning segment. Residues 286–299 (SIDQLVEEVNISKT) are Lumenal-facing. Residues 300 to 320 (FVGLVILPVVGNAAEHVTAIV) traverse the membrane as a helical segment. The Cytoplasmic portion of the chain corresponds to 321–334 (VSYRGQMDLALGVA). A helical transmembrane segment spans residues 335–355 (IGSSIQIALFLAPFLVIVGWI). The Lumenal portion of the chain corresponds to 356–358 (ISQ). A helical transmembrane segment spans residues 359-379 (PLTLYFESLETVILFVSVFLV). At 380 to 389 (NYLIQDGATH) the chain is on the cytoplasmic side. The chain crosses the membrane as a helical span at residues 390 to 410 (WLEGVQLLALYAIVVLAFFYY). Residues 411 to 412 (PQ) are Lumenal-facing.

Belongs to the Ca(2+):cation antiporter (CaCA) (TC 2.A.19) family.

It is found in the vacuole membrane. Its subcellular location is the endoplasmic reticulum membrane. Has a role in promoting intracellular calcium ion sequestration via the exchange of calcium ions for hydrogen ions across the vacuolar membrane. Involved also in manganese ion homeostasis via its uptake into the vacuole. In Schizosaccharomyces pombe (strain 972 / ATCC 24843) (Fission yeast), this protein is Vacuolar calcium ion transporter (vcx1).